We begin with the raw amino-acid sequence, 276 residues long: Large ribosomal subunit protein uL2c (276 aa).

The segment at 221-276 (RGSVMNPVDHPHGGGEGRAPIGRSRPVTPWGKPALGQKTRKPKKQSNKLILRKRKK) is disordered. Positions 258-276 (KTRKPKKQSNKLILRKRKK) are enriched in basic residues.

This sequence belongs to the universal ribosomal protein uL2 family. Part of the 50S ribosomal subunit.

The protein resides in the plastid. Its subcellular location is the chloroplast. The protein is Large ribosomal subunit protein uL2c (rpl2) of Stigeoclonium helveticum (Green alga).